The chain runs to 266 residues: Putative carbamate hydrolase RutD (266 aa).

It belongs to the AB hydrolase superfamily. Hydrolase RutD family.

It carries out the reaction carbamate + 2 H(+) = NH4(+) + CO2. In terms of biological role, involved in pyrimidine catabolism. May facilitate the hydrolysis of carbamate, a reaction that can also occur spontaneously. This Escherichia coli O45:K1 (strain S88 / ExPEC) protein is Putative carbamate hydrolase RutD.